A 191-amino-acid chain; its full sequence is A-type ATP synthase subunit E (191 aa).

It belongs to the V-ATPase E subunit family. Has multiple subunits with at least A(3), B(3), C, D, E, F, H, I and proteolipid K(x).

It localises to the cell membrane. Functionally, component of the A-type ATP synthase that produces ATP from ADP in the presence of a proton gradient across the membrane. This chain is A-type ATP synthase subunit E, found in Methanoregula boonei (strain DSM 21154 / JCM 14090 / 6A8).